A 494-amino-acid chain; its full sequence is Cytochrome P450 2A3 (494 aa).

A Phosphoserine modification is found at Ser-131. Lys-379 carries the N6-acetyllysine modification. Position 439 (Cys-439) interacts with heme.

The protein belongs to the cytochrome P450 family. The cofactor is heme. In terms of tissue distribution, lung.

It is found in the endoplasmic reticulum membrane. Its subcellular location is the microsome membrane. It catalyses the reaction an organic molecule + reduced [NADPH--hemoprotein reductase] + O2 = an alcohol + oxidized [NADPH--hemoprotein reductase] + H2O + H(+). Its function is as follows. Cytochromes P450 are a group of heme-thiolate monooxygenases. In liver microsomes, this enzyme is involved in an NADPH-dependent electron transport pathway. It oxidizes a variety of structurally unrelated compounds, including steroids, fatty acids, and xenobiotics. In Rattus norvegicus (Rat), this protein is Cytochrome P450 2A3 (Cyp2a3).